Reading from the N-terminus, the 50-residue chain is Kappa-actitoxin-Bcs4a (50 aa).

Belongs to the sea anemone type 5 potassium channel toxin family. In terms of processing, contains 4 disulfide bonds.

Its subcellular location is the secreted. The protein resides in the nematocyst. In terms of biological role, inhibits voltage-gated potassium channels (Kv1/KCNA). Is potent on Drosophila Shaker IR channels (IC(50)=94.25 nM), and rKv1.2/KCNA2 (IC(50)=172.59 nM), and moderately active on hKv1.3/KCNA3 (IC(50)=1006.48 nM), rKv1.6/KCNA6 (IC(50)=2245.93 nM), and Kv1.1/KCNA1 (IC(50) around 3 uM). In vivo, induces a rapid increase in swimming speed on zebrafish larvae, as well as death which occurs between 2 and 18 hours later. Also paralyzes swimming crabs (C.danae) when injected at the junction between the body and the walking leg. The protein is Kappa-actitoxin-Bcs4a of Bunodosoma caissarum (Sea anemone).